A 449-amino-acid polypeptide reads, in one-letter code: Exodeoxyribonuclease 7 large subunit (449 aa).

It belongs to the XseA family. In terms of assembly, heterooligomer composed of large and small subunits.

It is found in the cytoplasm. The enzyme catalyses Exonucleolytic cleavage in either 5'- to 3'- or 3'- to 5'-direction to yield nucleoside 5'-phosphates.. Its function is as follows. Bidirectionally degrades single-stranded DNA into large acid-insoluble oligonucleotides, which are then degraded further into small acid-soluble oligonucleotides. The polypeptide is Exodeoxyribonuclease 7 large subunit (Lacticaseibacillus casei (strain BL23) (Lactobacillus casei)).